A 423-amino-acid polypeptide reads, in one-letter code: Serine--tRNA ligase (423 aa).

229–231 (TAE) serves as a coordination point for L-serine. Residue 258-260 (RRE) participates in ATP binding. Glutamate 281 contributes to the L-serine binding site. 345-348 (EISS) provides a ligand contact to ATP. Serine 379 contacts L-serine.

This sequence belongs to the class-II aminoacyl-tRNA synthetase family. Type-1 seryl-tRNA synthetase subfamily. In terms of assembly, homodimer. The tRNA molecule binds across the dimer.

It localises to the cytoplasm. The catalysed reaction is tRNA(Ser) + L-serine + ATP = L-seryl-tRNA(Ser) + AMP + diphosphate + H(+). It catalyses the reaction tRNA(Sec) + L-serine + ATP = L-seryl-tRNA(Sec) + AMP + diphosphate + H(+). Its pathway is aminoacyl-tRNA biosynthesis; selenocysteinyl-tRNA(Sec) biosynthesis; L-seryl-tRNA(Sec) from L-serine and tRNA(Sec): step 1/1. In terms of biological role, catalyzes the attachment of serine to tRNA(Ser). Is also able to aminoacylate tRNA(Sec) with serine, to form the misacylated tRNA L-seryl-tRNA(Sec), which will be further converted into selenocysteinyl-tRNA(Sec). This is Serine--tRNA ligase (serS1) from Methanosarcina barkeri (strain Fusaro / DSM 804).